The following is a 512-amino-acid chain: MKKQHDTIIVLDFGSQYNQLIARRIREFGVYSELHPHTITAEEIKAMNPKGIIFSGGPNSVYGEGALHCDEKIFDLGLPIFGICYGMQLMTQQFGGTVERANHREYGKAVLKVENESKLYANLPEEQVVWMSHGDLVTGLPEGFVVDATSESCPIAGMSNEAKNLYGVQFHPEVRHSEHGNDLIKNFVFGVCGCSEGWNMENFIEVELEKIRETVGDKKVLCALSGGVDSSVVAVLIHKAIGDQLTCIFVDHGLLRKGEAEGVMKTFSEGFHMNVIKVDAKERFMNKLKGVEDPEQKRKIIGNEFIYVFDDEASKLEGMDFLAQGTLYTDIVESGTATAQTIKSHHNVGGLPEDMQFKLIEPLNTLFKDEVRVLGSELGIPDEIVWRQPFPGPGLGIRVLGEITEEKLEIVRESDAILREEIIKAGLDREIWQYFTALPGMRSVGVMGDERTYDYTVGIRAVTSIDGMTADWARIPWDVLEKISVRIVNEVKHVNRIVYDVTSKPPATIEWE.

Residues 7–197 form the Glutamine amidotransferase type-1 domain; sequence TIIVLDFGSQ…VFGVCGCSEG (191 aa). The Nucleophile role is filled by cysteine 84. Catalysis depends on residues histidine 171 and glutamate 173. The region spanning 198–387 is the GMPS ATP-PPase domain; it reads WNMENFIEVE…LGIPDEIVWR (190 aa). An ATP-binding site is contributed by 225–231; the sequence is SGGVDSS.

As to quaternary structure, homodimer.

The enzyme catalyses XMP + L-glutamine + ATP + H2O = GMP + L-glutamate + AMP + diphosphate + 2 H(+). It functions in the pathway purine metabolism; GMP biosynthesis; GMP from XMP (L-Gln route): step 1/1. Its function is as follows. Catalyzes the synthesis of GMP from XMP. This Bacillus anthracis protein is GMP synthase [glutamine-hydrolyzing].